We begin with the raw amino-acid sequence, 470 residues long: MAKPTTLYDKIWNDHLVDEQPDGTCLLYIDRHLVHEVTSPQAFEGLRVAGRKVHAPEKTLAVVDHNVPTTDRSKPNPDPESAEQIAALATNARDFGVQYFNEFDKRQGIVHVIGPEQGFTLPGTTIVCGDSHTSTHGAFGALAHGIGTSEVEHVLATQTLIQKKAKNMRAVVDGKLPDGVTAKDIILAIIGEIGTAGGTGYVLEYAGEAIRALTMEGRMTICNMSIEGGARAGLVAPDEKAYEFLKGRPLTPKGANWEQAVRYWDTLRSDDNAHFDHEIRLDAANLPPIVTWGTSPEDVVSVAGFVPDPAKIEDEAKRLSKERALAYMGLNAGTKITDIKLDRVFIGSCTNGRIEDLRAAAKVINGHTVNGHVNAMVVPGSGLVKEQAEAEGLDKIFIKAGFEWREPGCSMCLAMNPDKLAPEERCASTSNRNFEGRQGFKGRTHLVSPAMAAAAAIAGHFVDIRDWKAA.

[4Fe-4S] cluster-binding residues include cysteine 349, cysteine 409, and cysteine 412.

The protein belongs to the aconitase/IPM isomerase family. LeuC type 1 subfamily. In terms of assembly, heterodimer of LeuC and LeuD. It depends on [4Fe-4S] cluster as a cofactor.

It carries out the reaction (2R,3S)-3-isopropylmalate = (2S)-2-isopropylmalate. Its pathway is amino-acid biosynthesis; L-leucine biosynthesis; L-leucine from 3-methyl-2-oxobutanoate: step 2/4. In terms of biological role, catalyzes the isomerization between 2-isopropylmalate and 3-isopropylmalate, via the formation of 2-isopropylmaleate. This is 3-isopropylmalate dehydratase large subunit from Afipia carboxidovorans (strain ATCC 49405 / DSM 1227 / KCTC 32145 / OM5) (Oligotropha carboxidovorans).